The primary structure comprises 205 residues: Heme ligase (205 aa).

In terms of domain architecture, FAS1 spans 48–203; it reads KRTIINLIYS…GVVHIVDKPI (156 aa). The required for binding to host hemoglobin stretch occupies residues 154 to 172; that stretch reads LRNLLNNDLIVKIEGEFKH. 2 heme binding domain regions span residues 171–181 and 191–200; these read KHCNHSIYLNG and CHNGVVHIVD.

As to quaternary structure, component of the hemozoin formation complex (HFC) composed of falcipains FP2A and/or FP2B, plasmepsins PMII, PMIII/HAP and PMIV, heme detoxifying protein HDP and falcilysin FLN. The HFC complex is involved in hemoglobin degradation and detoxification of heme in the food vacuole during the asexual blood stage. Interacts with falcipain 2; the interaction is direct and enhances HDP catalytic activity. Interacts with host hemoglobin.

The protein localises to the vacuole. Its subcellular location is the host cytoplasm. It localises to the host cytosol. It carries out the reaction 2 Fe(III)-heme b = beta-hematin. Functionally, heme detoxifying enzyme that converts heme to crystalline hemozoin (beta-hematin) to protect the organism from the toxic effects of heme. During its development, P.falciparum proteolyzes vast amounts of host hemoglobin, leading to heme release. This is Heme ligase from Plasmodium falciparum (isolate 3D7).